The primary structure comprises 20 residues: Unknown protein NF045 from 2D-PAGE (20 aa).

This chain is Unknown protein NF045 from 2D-PAGE, found in Naegleria fowleri (Brain eating amoeba).